We begin with the raw amino-acid sequence, 648 residues long: Exoribonuclease 2 (648 aa).

Residues 191–518 enclose the RNB domain; the sequence is RIDLTYLDFI…INHRLIKSII (328 aa). In terms of domain architecture, S1 motif spans 565–647; the sequence is KKKYQANIID…GNKKIIATMI (83 aa).

Belongs to the RNR ribonuclease family. RNase II subfamily.

It is found in the cytoplasm. The catalysed reaction is Exonucleolytic cleavage in the 3'- to 5'-direction to yield nucleoside 5'-phosphates.. In terms of biological role, involved in mRNA degradation. Hydrolyzes single-stranded polyribonucleotides processively in the 3' to 5' direction. The chain is Exoribonuclease 2 from Buchnera aphidicola subsp. Cinara cedri (strain Cc).